The sequence spans 364 residues: Guanine nucleotide-binding protein alpha-8 subunit (364 aa).

Gly2 carries N-myristoyl glycine lipidation. Cys5 carries S-palmitoyl cysteine lipidation. Residues 38–364 (KILKLLILGP…QHTMQKVGIQ (327 aa)) form the G-alpha domain. The tract at residues 41-54 (KLLILGPGESGKST) is G1 motif. GTP contacts are provided by residues 46 to 53 (GPGESGKS), 186 to 192 (LKSRVPT), 211 to 215 (DVGGQ), 280 to 283 (NKID), and Ala336. Residues Ser53 and Thr192 each contribute to the Mg(2+) site. The interval 184 to 192 (DILKSRVPT) is G2 motif. A G3 motif region spans residues 207–216 (FKIFDVGGQR). Positions 276–283 (ILFLNKID) are G4 motif. The G5 motif stretch occupies residues 334–339 (TCATDT).

It belongs to the G-alpha family. In terms of assembly, g proteins are composed of 3 units; alpha, beta and gamma. The alpha chain contains the guanine nucleotide binding site.

Guanine nucleotide-binding proteins (G proteins) are involved as modulators or transducers in various transmembrane signaling systems. This is Guanine nucleotide-binding protein alpha-8 subunit (gpa-8) from Caenorhabditis briggsae.